The chain runs to 555 residues: CTP synthase (555 aa).

The segment at 1-267 (MAKYIFVTGG…GNYLTLRLGL (267 aa)) is amidoligase domain. Serine 13 contributes to the CTP binding site. Serine 13 contacts UTP. ATP is bound at residue 14–19 (SVGKGI). L-glutamine is bound at residue tyrosine 54. ATP is bound at residue aspartate 71. Positions 71 and 141 each coordinate Mg(2+). CTP-binding positions include 148 to 150 (DIE), 188 to 193 (KTKPTQ), and lysine 224. Residues 188-193 (KTKPTQ) and lysine 224 contribute to the UTP site. One can recognise a Glutamine amidotransferase type-1 domain in the interval 292–535 (AIALVGKYVE…IAAAAQTFRE (244 aa)). Glycine 354 is a binding site for L-glutamine. The active-site Nucleophile; for glutamine hydrolysis is cysteine 381. L-glutamine-binding positions include 382-385 (LGMQ), glutamate 406, and arginine 463. Residues histidine 508 and glutamate 510 contribute to the active site.

The protein belongs to the CTP synthase family. Homotetramer.

It carries out the reaction UTP + L-glutamine + ATP + H2O = CTP + L-glutamate + ADP + phosphate + 2 H(+). The enzyme catalyses L-glutamine + H2O = L-glutamate + NH4(+). The catalysed reaction is UTP + NH4(+) + ATP = CTP + ADP + phosphate + 2 H(+). It participates in pyrimidine metabolism; CTP biosynthesis via de novo pathway; CTP from UDP: step 2/2. Its activity is regulated as follows. Allosterically activated by GTP, when glutamine is the substrate; GTP has no effect on the reaction when ammonia is the substrate. The allosteric effector GTP functions by stabilizing the protein conformation that binds the tetrahedral intermediate(s) formed during glutamine hydrolysis. Inhibited by the product CTP, via allosteric rather than competitive inhibition. Its function is as follows. Catalyzes the ATP-dependent amination of UTP to CTP with either L-glutamine or ammonia as the source of nitrogen. Regulates intracellular CTP levels through interactions with the four ribonucleotide triphosphates. The chain is CTP synthase from Roseiflexus castenholzii (strain DSM 13941 / HLO8).